The sequence spans 232 residues: Ribose-5-phosphate isomerase A (232 aa).

Substrate contacts are provided by residues 28 to 31 (TGST), 83 to 86 (DGAD), and 96 to 99 (KGGG). Glutamate 105 functions as the Proton acceptor in the catalytic mechanism. Lysine 123 serves as a coordination point for substrate.

Belongs to the ribose 5-phosphate isomerase family. In terms of assembly, homodimer.

The catalysed reaction is aldehydo-D-ribose 5-phosphate = D-ribulose 5-phosphate. Its pathway is carbohydrate degradation; pentose phosphate pathway; D-ribose 5-phosphate from D-ribulose 5-phosphate (non-oxidative stage): step 1/1. Functionally, catalyzes the reversible conversion of ribose-5-phosphate to ribulose 5-phosphate. The sequence is that of Ribose-5-phosphate isomerase A from Allorhizobium ampelinum (strain ATCC BAA-846 / DSM 112012 / S4) (Agrobacterium vitis (strain S4)).